Here is a 302-residue protein sequence, read N- to C-terminus: Geranylgeranyl diphosphate synthase (302 aa).

Isopentenyl diphosphate-binding residues include lysine 53, arginine 56, and histidine 87. Mg(2+) contacts are provided by aspartate 94 and aspartate 100. A (2E,6E)-farnesyl diphosphate-binding site is contributed by arginine 105. Arginine 106 lines the isopentenyl diphosphate pocket. (2E,6E)-farnesyl diphosphate contacts are provided by lysine 189, threonine 190, and glutamine 227.

It belongs to the FPP/GGPP synthase family. The cofactor is Mg(2+).

It carries out the reaction isopentenyl diphosphate + (2E,6E)-farnesyl diphosphate = (2E,6E,10E)-geranylgeranyl diphosphate + diphosphate. It participates in isoprenoid biosynthesis; geranylgeranyl diphosphate biosynthesis; geranylgeranyl diphosphate from farnesyl diphosphate and isopentenyl diphosphate: step 1/1. In terms of biological role, catalyzes the condensation of farnesyl diphosphate (FPP) and isopentenyl diphosphate (IPP) to yield geranylgeranyl diphosphate (GGPP) needed for biosynthesis of carotenoids and diterpenes. The sequence is that of Geranylgeranyl diphosphate synthase (crtE) from Pantoea ananas (Erwinia uredovora).